Reading from the N-terminus, the 807-residue chain is uncharacterized protein (807 aa).

The region spanning 281-566 (IIQSLKSEEF…DKILFLGTNI (286 aa)) is the Reverse transcriptase domain.

The protein resides in the mitochondrion. This is an uncharacterized protein from Schizosaccharomyces pombe (strain 972 / ATCC 24843) (Fission yeast).